The sequence spans 497 residues: Protein nucleotidyltransferase YdiU (497 aa).

ATP contacts are provided by Gly88, Gly90, Arg91, Lys110, Asp122, Gly123, Arg173, and Arg180. The active-site Proton acceptor is Asp249. Mg(2+) is bound by residues Asn250 and Asp259. Asp259 is an ATP binding site. The segment at 477–497 (FARYAEPPEGGGRGYRTFCGT) is disordered.

This sequence belongs to the SELO family. Mg(2+) is required as a cofactor. Requires Mn(2+) as cofactor.

It catalyses the reaction L-seryl-[protein] + ATP = 3-O-(5'-adenylyl)-L-seryl-[protein] + diphosphate. The enzyme catalyses L-threonyl-[protein] + ATP = 3-O-(5'-adenylyl)-L-threonyl-[protein] + diphosphate. The catalysed reaction is L-tyrosyl-[protein] + ATP = O-(5'-adenylyl)-L-tyrosyl-[protein] + diphosphate. It carries out the reaction L-histidyl-[protein] + UTP = N(tele)-(5'-uridylyl)-L-histidyl-[protein] + diphosphate. It catalyses the reaction L-seryl-[protein] + UTP = O-(5'-uridylyl)-L-seryl-[protein] + diphosphate. The enzyme catalyses L-tyrosyl-[protein] + UTP = O-(5'-uridylyl)-L-tyrosyl-[protein] + diphosphate. Its function is as follows. Nucleotidyltransferase involved in the post-translational modification of proteins. It can catalyze the addition of adenosine monophosphate (AMP) or uridine monophosphate (UMP) to a protein, resulting in modifications known as AMPylation and UMPylation. In Methylorubrum extorquens (strain PA1) (Methylobacterium extorquens), this protein is Protein nucleotidyltransferase YdiU.